We begin with the raw amino-acid sequence, 443 residues long: Multidrug resistance protein MdtA (443 aa).

The N-terminal stretch at 1–24 (MKAQSKRTSRLLILLGIAVAIIVA) is a signal peptide. Polar residues predominate over residues 36–46 (DGSTGAQQHAV). 2 disordered regions span residues 36 to 57 (DGSTGAQQHAVGNNPARAGGRR) and 398 to 443 (TPRS…AEKS). Residues 409–419 (AAEKPATAEKA) show a composition bias toward basic and acidic residues. The segment covering 427–443 (SATGASAGSTTTAAEKS) has biased composition (low complexity).

The protein belongs to the membrane fusion protein (MFP) (TC 8.A.1) family. Part of a tripartite efflux system composed of MdtA, MdtB and MdtC.

The protein resides in the cell inner membrane. This chain is Multidrug resistance protein MdtA, found in Yersinia enterocolitica serotype O:8 / biotype 1B (strain NCTC 13174 / 8081).